The primary structure comprises 428 residues: MEKSMASSNLIKQLQERGLVAQVTDEEALAQRLAQGPIALYCGFDPTADSLHLGHLVPLLCLKRFQMAGHKPVALVGGATGLIGDPSFKATERKLNTEDTVQEWVDKIRRQVAPFLDFDCGENSAIAANNYDWFGNMNVLTFLRDIGKHFSVNQMINKEAVKQRLNRDDVGISFTEFSYNLLQGYDFACLNKLHGVALQIGGSDQWGNITSGIDLTRRLHQNQVFGLTVPLITKSDGTKFGKTEGGAVWLDPKKTSPYKFYQFWINTADADVYRFLKFFTFMSIDEINALEEEDKNSGKAPRAQYVLAEQVTRLVHGEEGLAAAKRITESLFNGNLNALSEADFEQLAQNGVPMIEMEKGADLMQALVDSELQPSRGQARKTIASNAITINGEKQSDPEYTFSDSDRLFGRYTLLRRGKKNYCLVCWK.

Residue tyrosine 41 participates in L-tyrosine binding. Residues 46 to 55 (PTADSLHLGH) carry the 'HIGH' region motif. L-tyrosine contacts are provided by tyrosine 179 and glutamine 183. The short motif at 239-243 (KFGKT) is the 'KMSKS' region element. An ATP-binding site is contributed by lysine 242. Positions 361-418 (ADLMQALVDSELQPSRGQARKTIASNAITINGEKQSDPEYTFSDSDRLFGRYTLLRRG) constitute an S4 RNA-binding domain.

This sequence belongs to the class-I aminoacyl-tRNA synthetase family. TyrS type 1 subfamily. Homodimer.

It localises to the cytoplasm. It carries out the reaction tRNA(Tyr) + L-tyrosine + ATP = L-tyrosyl-tRNA(Tyr) + AMP + diphosphate + H(+). Functionally, catalyzes the attachment of tyrosine to tRNA(Tyr) in a two-step reaction: tyrosine is first activated by ATP to form Tyr-AMP and then transferred to the acceptor end of tRNA(Tyr). This chain is Tyrosine--tRNA ligase, found in Cronobacter sakazakii (strain ATCC BAA-894) (Enterobacter sakazakii).